The primary structure comprises 59 residues: Potassium channel toxin alpha-KTx 4.7 (59 aa).

The signal sequence occupies residues 1-22 (MKAFYGILIIFILISMLDLSQQ). Disulfide bonds link Cys29/Cys50, Cys35/Cys55, and Cys39/Cys57. Residues 48–55 (GKCMNGKC) are interaction with Ca(2+)-activated K(+) channels.

Belongs to the short scorpion toxin superfamily. Potassium channel inhibitor family. Alpha-KTx 04 subfamily. As to expression, expressed by the venom gland.

It localises to the secreted. In terms of biological role, potently blocks Kv1.1/KCNA1 (85%), Kv1.2/KCNA2 (91%), Kv1.3/KCNA3 (89%), Kv1.6/KCNA6 (94%), and Shaker (97%). The sequence is that of Potassium channel toxin alpha-KTx 4.7 from Tityus stigmurus (Brazilian scorpion).